The primary structure comprises 192 residues: MRLLCGLWLWLSLLKVLQAQTPTPLPLPPPMQSFQGNQFQGEWFVLGLAGNSFRPEHRALLNAFTATFELSDDGRFEVWNAMTRGQHCDTWSYVLIPAAQPGQFTVDHGVEPGADREETRVVDSDYTQFALMLSRRHTSRLAVLRISLLGRSWLLPPGTLDQFICLGRAQGLSDDNIVFPDVTGWSPQASVC.

A signal peptide spans 1–19 (MRLLCGLWLWLSLLKVLQA). Cysteine 88 and cysteine 192 form a disulfide bridge.

The protein belongs to the calycin superfamily. Lipocalin family. Monomer.

Its subcellular location is the secreted. In terms of biological role, binds all-trans retinoic acid and may act as a retinoid carrier protein within the epididymis. May play a role in male fertility. This is Epididymal-specific lipocalin-12 (LCN12) from Homo sapiens (Human).